Reading from the N-terminus, the 765-residue chain is Amine oxidase [copper-containing] 3 (765 aa).

The Cytoplasmic segment spans residues 1–6 (MTQKTT). Residues 7–27 (LVLLALAVITIFALVCVLLAG) form a helical; Signal-anchor for type II membrane protein membrane-spanning segment. The Extracellular segment spans residues 28–765 (RSGDGGGLSQ…SHGGFAYRDN (738 aa)). An N-linked (GlcNAc...) asparagine glycan is attached at Asn137. A disulfide bond links Cys198 and Cys199. N-linked (GlcNAc...) asparagine glycans are attached at residues Asn232 and Asn294. Asp386 acts as the Proton acceptor in catalysis. The cysteines at positions 404 and 430 are disulfide-linked. The Schiff-base intermediate with substrate; via topaquinone role is filled by Tyr471. Residue Tyr471 is modified to 2',4',5'-topaquinone. His520 and His522 together coordinate Cu(2+). Residues Asp529, Leu530, Asp531, and Glu572 each coordinate Ca(2+). Asn592 is a glycosylation site (N-linked (GlcNAc...) asparagine). Ca(2+) is bound at residue Glu641. The N-linked (GlcNAc...) asparagine glycan is linked to Asn659. Residue Phe663 participates in Ca(2+) binding. A glycan (N-linked (GlcNAc...) asparagine) is linked at Asn666. Positions 667, 673, and 674 each coordinate Ca(2+). Cu(2+) is bound at residue His684. Cys734 and Cys741 are disulfide-bonded.

It belongs to the copper/topaquinone oxidase family. Homodimer; disulfide-linked. Probably forms heterodimers with AOC2. Cu(2+) serves as cofactor. It depends on Ca(2+) as a cofactor. The cofactor is L-topaquinone. Topaquinone (TPQ) is generated by copper-dependent autoxidation of a specific tyrosyl residue. In terms of processing, N- and O-glycosylated.

It localises to the cell membrane. It catalyses the reaction methylamine + O2 + H2O = formaldehyde + H2O2 + NH4(+). It carries out the reaction benzylamine + O2 + H2O = benzaldehyde + H2O2 + NH4(+). The catalysed reaction is 2-phenylethylamine + O2 + H2O = 2-phenylacetaldehyde + H2O2 + NH4(+). Catalyzes the oxidative deamination of primary amines to the corresponding aldehydes with the concomitant production of hydrogen peroxide and ammonia. Has a preference for the primary monoamines methylamine and benzylamine. Could also act on 2-phenylethylamine but much less efficiently. At endothelial cells surface can also function as a cell adhesion protein that participates in lymphocyte extravasation and recirculation by mediating the binding of lymphocytes to peripheral lymph node vascular endothelial cells in an L-selectin-independent fashion. The polypeptide is Amine oxidase [copper-containing] 3 (Mus musculus (Mouse)).